Reading from the N-terminus, the 470-residue chain is 6-phospho-beta-galactosidase 1 (470 aa).

D-galactose 6-phosphate-binding residues include Q23, H120, N163, E164, and N300. E164 functions as the Proton donor in the catalytic mechanism. E378 serves as the catalytic Nucleophile. 4 residues coordinate D-galactose 6-phosphate: S434, W435, K441, and Y443.

This sequence belongs to the glycosyl hydrolase 1 family.

It carries out the reaction a 6-phospho-beta-D-galactoside + H2O = D-galactose 6-phosphate + an alcohol. The protein operates within carbohydrate metabolism; lactose degradation; D-galactose 6-phosphate and beta-D-glucose from lactose 6-phosphate: step 1/1. This Streptococcus pneumoniae (strain ATCC BAA-255 / R6) protein is 6-phospho-beta-galactosidase 1.